We begin with the raw amino-acid sequence, 144 residues long: UPF0102 protein sce2912 (144 aa).

It belongs to the UPF0102 family.

This Sorangium cellulosum (strain So ce56) (Polyangium cellulosum (strain So ce56)) protein is UPF0102 protein sce2912.